The sequence spans 169 residues: Pyrophosphate-energized proton pump 1 (169 aa).

The next 3 helical transmembrane spans lie at 45–65 (YVVAGLLFGGLIPYLFGGIAM), 114–134 (VIPSLLPVLAPLVVYFGVLLI), and 141–161 (AFAALGAYLLAVIMNRVLVAI).

It belongs to the H(+)-translocating pyrophosphatase (TC 3.A.10) family. Homodimer. The cofactor is Mg(2+).

The protein resides in the cell inner membrane. It catalyses the reaction diphosphate + H2O + H(+)(in) = 2 phosphate + 2 H(+)(out). Functionally, proton pump that utilizes the energy of pyrophosphate hydrolysis as the driving force for proton movement across the membrane. Generates a proton motive force. In Rhizobium leguminosarum bv. trifolii, this protein is Pyrophosphate-energized proton pump 1 (hppA1).